The chain runs to 232 residues: MNKKIQLQDLGNRDYKSTWEYQEELFQDIVDLKIKNRREELDLPTSNYLLFVEHPHVYTLGKSGDLENLLLNEKQLEAKGAAFYKINRGGDITYHGPGQIVGYPILDLENFFTDIHKYLRLLEESMILTLAEYGLESGRSEGETGVWLGVGTPFARKICAMGVRASRWVTMHGFALNVNVDLGYFDNIIPCGIRGKGVTSLNVELGVEKVDEDEVKSKIIKHLTHLFEAEIV.

Positions 43–231 constitute a BPL/LPL catalytic domain; the sequence is LPTSNYLLFV…HLTHLFEAEI (189 aa). Substrate contacts are provided by residues 88-95, 160-162, and 173-175; these read RGGDITYH, AMG, and GFA. Residue C191 is the Acyl-thioester intermediate of the active site.

It belongs to the LipB family.

Its subcellular location is the cytoplasm. It carries out the reaction octanoyl-[ACP] + L-lysyl-[protein] = N(6)-octanoyl-L-lysyl-[protein] + holo-[ACP] + H(+). Its pathway is protein modification; protein lipoylation via endogenous pathway; protein N(6)-(lipoyl)lysine from octanoyl-[acyl-carrier-protein]: step 1/2. Its function is as follows. Catalyzes the transfer of endogenously produced octanoic acid from octanoyl-acyl-carrier-protein onto the lipoyl domains of lipoate-dependent enzymes. Lipoyl-ACP can also act as a substrate although octanoyl-ACP is likely to be the physiological substrate. This is Octanoyltransferase from Flavobacterium johnsoniae (strain ATCC 17061 / DSM 2064 / JCM 8514 / BCRC 14874 / CCUG 350202 / NBRC 14942 / NCIMB 11054 / UW101) (Cytophaga johnsonae).